A 202-amino-acid chain; its full sequence is Alpha-S1-casein (202 aa).

2 disordered regions span residues 1 to 25 and 51 to 84; these read RPKL…VLKE and LKEK…VVPI. Basic and acidic residues-rich tracts occupy residues 16-25 and 51-63; these read QDSREKVLKE and LKEK…KEYL. Residue serine 18 is modified to Phosphoserine. Residues 70-80 are compositionally biased toward low complexity; that stretch reads QESSSTSSSEE. Serine 72, serine 73, serine 74, serine 76, serine 77, and serine 78 each carry phosphoserine.

This sequence belongs to the alpha-casein family. As to expression, mammary gland specific. Secreted in milk.

It is found in the secreted. Functionally, important role in the capacity of milk to transport calcium phosphate. This Equus asinus (Donkey) protein is Alpha-S1-casein.